Reading from the N-terminus, the 513-residue chain is Mannosyl-oligosaccharide alpha-1,2-mannosidase 1B (513 aa).

The first 21 residues, 1–21 (MHLPSLSLSLTALAIASPSAA), serve as a signal peptide directing secretion. Asparagine 97, asparagine 117, asparagine 150, asparagine 184, asparagine 251, asparagine 322, asparagine 348, and asparagine 368 each carry an N-linked (GlcNAc...) asparagine glycan. Cysteine 334 and cysteine 363 are disulfide-bonded. The Proton donor role is filled by glutamate 377. Threonine 503 contacts Ca(2+).

It belongs to the glycosyl hydrolase 47 family. Monomer. Requires Ca(2+) as cofactor. Mg(2+) is required as a cofactor.

It is found in the cytoplasmic vesicle lumen. The enzyme catalyses N(4)-(alpha-D-Man-(1-&gt;2)-alpha-D-Man-(1-&gt;2)-alpha-D-Man-(1-&gt;3)-[alpha-D-Man-(1-&gt;2)-alpha-D-Man-(1-&gt;3)-[alpha-D-Man-(1-&gt;2)-alpha-D-Man-(1-&gt;6)]-alpha-D-Man-(1-&gt;6)]-beta-D-Man-(1-&gt;4)-beta-D-GlcNAc-(1-&gt;4)-beta-D-GlcNAc)-L-asparaginyl-[protein] (N-glucan mannose isomer 9A1,2,3B1,2,3) + 4 H2O = N(4)-(alpha-D-Man-(1-&gt;3)-[alpha-D-Man-(1-&gt;3)-[alpha-D-Man-(1-&gt;6)]-alpha-D-Man-(1-&gt;6)]-beta-D-Man-(1-&gt;4)-beta-D-GlcNAc-(1-&gt;4)-beta-D-GlcNAc)-L-asparaginyl-[protein] (N-glucan mannose isomer 5A1,2) + 4 beta-D-mannose. The catalysed reaction is N(4)-(alpha-D-Man-(1-&gt;2)-alpha-D-Man-(1-&gt;2)-alpha-D-Man-(1-&gt;3)-[alpha-D-Man-(1-&gt;3)-[alpha-D-Man-(1-&gt;2)-alpha-D-Man-(1-&gt;6)]-alpha-D-Man-(1-&gt;6)]-beta-D-Man-(1-&gt;4)-beta-D-GlcNAc-(1-&gt;4)-beta-D-GlcNAc)-L-asparaginyl-[protein] (N-glucan mannose isomer 8A1,2,3B1,3) + 3 H2O = N(4)-(alpha-D-Man-(1-&gt;3)-[alpha-D-Man-(1-&gt;3)-[alpha-D-Man-(1-&gt;6)]-alpha-D-Man-(1-&gt;6)]-beta-D-Man-(1-&gt;4)-beta-D-GlcNAc-(1-&gt;4)-beta-D-GlcNAc)-L-asparaginyl-[protein] (N-glucan mannose isomer 5A1,2) + 3 beta-D-mannose. The protein operates within protein modification; protein glycosylation. Functionally, involved in the maturation of Asn-linked oligosaccharides. Progressively trims alpha-1,2-linked mannose residues from Man(9)GlcNAc(2) to produce Man(5)GlcNAc(2). This Aspergillus phoenicis (Aspergillus saitoi) protein is Mannosyl-oligosaccharide alpha-1,2-mannosidase 1B (mns1B).